The primary structure comprises 291 residues: 4-diphosphocytidyl-2-C-methyl-D-erythritol kinase (291 aa).

Lys10 is an active-site residue. 99-109 (PMGGGLGGGSS) provides a ligand contact to ATP. Asp141 is an active-site residue.

This sequence belongs to the GHMP kinase family. IspE subfamily. Homodimer.

It catalyses the reaction 4-CDP-2-C-methyl-D-erythritol + ATP = 4-CDP-2-C-methyl-D-erythritol 2-phosphate + ADP + H(+). The protein operates within isoprenoid biosynthesis; isopentenyl diphosphate biosynthesis via DXP pathway; isopentenyl diphosphate from 1-deoxy-D-xylulose 5-phosphate: step 3/6. Catalyzes the phosphorylation of the position 2 hydroxy group of 4-diphosphocytidyl-2C-methyl-D-erythritol. The protein is 4-diphosphocytidyl-2-C-methyl-D-erythritol kinase of Photorhabdus laumondii subsp. laumondii (strain DSM 15139 / CIP 105565 / TT01) (Photorhabdus luminescens subsp. laumondii).